The sequence spans 889 residues: DNA mismatch repair protein MutS (889 aa).

Glycine 641 to serine 648 serves as a coordination point for ATP.

Belongs to the DNA mismatch repair MutS family.

In terms of biological role, this protein is involved in the repair of mismatches in DNA. It is possible that it carries out the mismatch recognition step. This protein has a weak ATPase activity. The sequence is that of DNA mismatch repair protein MutS from Orientia tsutsugamushi (strain Ikeda) (Rickettsia tsutsugamushi).